A 427-amino-acid chain; its full sequence is MSRSEDLYARAQHRIPGGVNSPVRAFNGVGGTPIFFQRGEGAYVYDEDKKRYIDYVGSWGPMILGHSHPDVLDAVRQQLDFGLSFGAPTEVEITMAEKVCELVPSMDMVRMVNSGTEATMSAIRLARGYTGRDKIVKFEGCYHGHSDSLLVKAGSGALTLGVPNSPGVPADLAQHTITLQYNDIEEVKRCFSEIGDQIACIIVEPVAGNMNCILPVEGFLETLRKVCDESGAVLIFDEVMTGFRVALGGAQAHFGIVPDLTTLGKVIGAGMPVGAFGGKREIMEHISPLGPVYQAGTLSGNPVAMVAGLAVLNKISEEGFHQTLGTKADRLVSGLKQAADEAGVPFCVVSVGGMFGFFFTEAEVVATFADVQKCDLSKFKAFFHYMLEEGVYFAPAAFEAGFISQAHTEEDIDYTIEAAKRSFAKLV.

N6-(pyridoxal phosphate)lysine is present on K265.

The protein belongs to the class-III pyridoxal-phosphate-dependent aminotransferase family. HemL subfamily. Homodimer. The cofactor is pyridoxal 5'-phosphate.

The protein localises to the cytoplasm. It carries out the reaction (S)-4-amino-5-oxopentanoate = 5-aminolevulinate. It participates in porphyrin-containing compound metabolism; protoporphyrin-IX biosynthesis; 5-aminolevulinate from L-glutamyl-tRNA(Glu): step 2/2. The protein is Glutamate-1-semialdehyde 2,1-aminomutase of Marinomonas sp. (strain MWYL1).